Reading from the N-terminus, the 116-residue chain is Ribonuclease P protein component (116 aa).

The protein belongs to the RnpA family. In terms of assembly, consists of a catalytic RNA component (M1 or rnpB) and a protein subunit.

It catalyses the reaction Endonucleolytic cleavage of RNA, removing 5'-extranucleotides from tRNA precursor.. Functionally, RNaseP catalyzes the removal of the 5'-leader sequence from pre-tRNA to produce the mature 5'-terminus. It can also cleave other RNA substrates such as 4.5S RNA. The protein component plays an auxiliary but essential role in vivo by binding to the 5'-leader sequence and broadening the substrate specificity of the ribozyme. This chain is Ribonuclease P protein component, found in Gluconacetobacter diazotrophicus (strain ATCC 49037 / DSM 5601 / CCUG 37298 / CIP 103539 / LMG 7603 / PAl5).